Reading from the N-terminus, the 124-residue chain is Putative C(50) carotenoid beta-cyclase subunit A (124 aa).

3 consecutive transmembrane segments (helical) span residues 1 to 21 (MIGL…LVID), 34 to 54 (AAAL…VLGV), and 78 to 98 (FEEV…AAGV).

The protein belongs to the lycopene beta-cyclase family. As to quaternary structure, may form a complex with LbtBC.

The protein localises to the cell membrane. Its pathway is carotenoid biosynthesis. Functionally, involved in the biosynthesis of C(50) beta-cyclic carotenoids. May have C(50) carotenoid beta-cyclase activity and produce the C(50) beta-cyclic carotenoid C.p.450 from the C(50) carotenoid dihydrobisanhydrobacterioruberin (DH-BABR). The chain is Putative C(50) carotenoid beta-cyclase subunit A from Dietzia sp. (strain CQ4).